A 400-amino-acid chain; its full sequence is Renin (400 aa).

A signal peptide spans 1–23; it reads MDAWRGMPRWGLLLLLWGSCTFG. The propeptide at 24–60 is activation peptide; the sequence is LPTETTTFKRISLKRMPSIRESLKERGVDMARLGPER. Asparagine 65 carries an N-linked (GlcNAc...) asparagine glycan. The Peptidase A1 domain occupies 80–397; that stretch reads YYGEIGIGTP…DRGNNRIGFA (318 aa). Aspartate 98 is a catalytic residue. A disulfide bridge links cysteine 111 with cysteine 118. Asparagine 135 is a glycosylation site (N-linked (GlcNAc...) asparagine). A disulfide bond links cysteine 277 and cysteine 281. The active site involves aspartate 286. Cysteine 319 and cysteine 356 form a disulfide bridge.

Belongs to the peptidase A1 family. Interacts with ATP6AP2.

The protein localises to the secreted. Its subcellular location is the membrane. The catalysed reaction is Cleavage of Leu-|-Xaa bond in angiotensinogen to generate angiotensin I.. With respect to regulation, interaction with ATP6AP2 results in a 5-fold increased efficiency in angiotensinogen processing. In terms of biological role, renin is a highly specific endopeptidase, whose only known function is to generate angiotensin I from angiotensinogen in the plasma, initiating a cascade of reactions that produce an elevation of blood pressure and increased sodium retention by the kidney. The sequence is that of Renin (REN) from Callithrix jacchus (White-tufted-ear marmoset).